A 434-amino-acid chain; its full sequence is Glutamyl-tRNA reductase (434 aa).

Residues 52–55 (TCNR), Ser115, 120–122 (ETQ), and Gln126 each bind substrate. Cys53 acts as the Nucleophile in catalysis. NADP(+) is bound at residue 195–200 (GAGEMI).

It belongs to the glutamyl-tRNA reductase family. In terms of assembly, homodimer.

It carries out the reaction (S)-4-amino-5-oxopentanoate + tRNA(Glu) + NADP(+) = L-glutamyl-tRNA(Glu) + NADPH + H(+). The protein operates within porphyrin-containing compound metabolism; protoporphyrin-IX biosynthesis; 5-aminolevulinate from L-glutamyl-tRNA(Glu): step 1/2. In terms of biological role, catalyzes the NADPH-dependent reduction of glutamyl-tRNA(Glu) to glutamate 1-semialdehyde (GSA). The protein is Glutamyl-tRNA reductase of Cupriavidus necator (strain ATCC 17699 / DSM 428 / KCTC 22496 / NCIMB 10442 / H16 / Stanier 337) (Ralstonia eutropha).